The primary structure comprises 381 residues: Dual-specificity RNA methyltransferase RlmN (381 aa).

E96 acts as the Proton acceptor in catalysis. In terms of domain architecture, Radical SAM core spans 102–342 (TDDRGTLCVS…TRTTRGDDID (241 aa)). Cysteines 109 and 345 form a disulfide. [4Fe-4S] cluster-binding residues include C116, C120, and C123. S-adenosyl-L-methionine is bound by residues 170–171 (GE), S202, 224–226 (SLH), and N302. Residue C345 is the S-methylcysteine intermediate of the active site.

Belongs to the radical SAM superfamily. RlmN family. [4Fe-4S] cluster serves as cofactor.

Its subcellular location is the cytoplasm. The enzyme catalyses adenosine(2503) in 23S rRNA + 2 reduced [2Fe-2S]-[ferredoxin] + 2 S-adenosyl-L-methionine = 2-methyladenosine(2503) in 23S rRNA + 5'-deoxyadenosine + L-methionine + 2 oxidized [2Fe-2S]-[ferredoxin] + S-adenosyl-L-homocysteine. It carries out the reaction adenosine(37) in tRNA + 2 reduced [2Fe-2S]-[ferredoxin] + 2 S-adenosyl-L-methionine = 2-methyladenosine(37) in tRNA + 5'-deoxyadenosine + L-methionine + 2 oxidized [2Fe-2S]-[ferredoxin] + S-adenosyl-L-homocysteine. In terms of biological role, specifically methylates position 2 of adenine 2503 in 23S rRNA and position 2 of adenine 37 in tRNAs. m2A2503 modification seems to play a crucial role in the proofreading step occurring at the peptidyl transferase center and thus would serve to optimize ribosomal fidelity. This chain is Dual-specificity RNA methyltransferase RlmN, found in Pseudomonas putida (strain W619).